The primary structure comprises 242 residues: Small ribosomal subunit protein uS3 (242 aa).

A KH type-2 domain is found at 39 to 110 (IRKFIHKKYG…QVRINVVEVE (72 aa)). The disordered stretch occupies residues 221-242 (GASPRRRASRRPQQFEDRSNEG). The span at 233–242 (QQFEDRSNEG) shows a compositional bias: basic and acidic residues.

It belongs to the universal ribosomal protein uS3 family. Part of the 30S ribosomal subunit. Forms a tight complex with proteins S10 and S14.

Binds the lower part of the 30S subunit head. Binds mRNA in the 70S ribosome, positioning it for translation. This Parasynechococcus marenigrum (strain WH8102) protein is Small ribosomal subunit protein uS3.